Consider the following 340-residue polypeptide: Anthranilate phosphoribosyltransferase (340 aa).

5-phospho-alpha-D-ribose 1-diphosphate contacts are provided by residues Gly-84, 87–88 (GD), Thr-92, 94–97 (NIST), 112–120 (KHGSRSVSS), and Ser-124. Gly-84 provides a ligand contact to anthranilate. Ser-96 serves as a coordination point for Mg(2+). Arg-170 is an anthranilate binding site. Mg(2+) contacts are provided by Asp-228 and Glu-229.

It belongs to the anthranilate phosphoribosyltransferase family. Homodimer. Mg(2+) serves as cofactor.

The catalysed reaction is N-(5-phospho-beta-D-ribosyl)anthranilate + diphosphate = 5-phospho-alpha-D-ribose 1-diphosphate + anthranilate. It functions in the pathway amino-acid biosynthesis; L-tryptophan biosynthesis; L-tryptophan from chorismate: step 2/5. Functionally, catalyzes the transfer of the phosphoribosyl group of 5-phosphorylribose-1-pyrophosphate (PRPP) to anthranilate to yield N-(5'-phosphoribosyl)-anthranilate (PRA). This chain is Anthranilate phosphoribosyltransferase, found in Psychromonas ingrahamii (strain DSM 17664 / CCUG 51855 / 37).